We begin with the raw amino-acid sequence, 295 residues long: Bifunctional protein FolD (295 aa).

NADP(+)-binding positions include 166 to 168 (GRS), S195, and I236.

This sequence belongs to the tetrahydrofolate dehydrogenase/cyclohydrolase family. Homodimer.

The catalysed reaction is (6R)-5,10-methylene-5,6,7,8-tetrahydrofolate + NADP(+) = (6R)-5,10-methenyltetrahydrofolate + NADPH. It carries out the reaction (6R)-5,10-methenyltetrahydrofolate + H2O = (6R)-10-formyltetrahydrofolate + H(+). It participates in one-carbon metabolism; tetrahydrofolate interconversion. In terms of biological role, catalyzes the oxidation of 5,10-methylenetetrahydrofolate to 5,10-methenyltetrahydrofolate and then the hydrolysis of 5,10-methenyltetrahydrofolate to 10-formyltetrahydrofolate. This is Bifunctional protein FolD from Pelodictyon phaeoclathratiforme (strain DSM 5477 / BU-1).